The following is a 415-amino-acid chain: tRNA(Met) cytidine acetate ligase (415 aa).

ATP contacts are provided by residues valine 7 to histidine 20, glycine 101, asparagine 162, and arginine 187 to isoleucine 188.

Belongs to the TmcAL family. Homodimer.

The protein resides in the cytoplasm. The catalysed reaction is cytidine(34) in elongator tRNA(Met) + acetate + ATP = N(4)-acetylcytidine(34) in elongator tRNA(Met) + AMP + diphosphate. Catalyzes the formation of N(4)-acetylcytidine (ac(4)C) at the wobble position of elongator tRNA(Met), using acetate and ATP as substrates. First activates an acetate ion to form acetyladenylate (Ac-AMP) and then transfers the acetyl group to tRNA to form ac(4)C34. The chain is tRNA(Met) cytidine acetate ligase from Bacillus subtilis (strain 168).